A 191-amino-acid chain; its full sequence is Putative glutathione-dependent formaldehyde-activating enzyme (191 aa).

The region spanning Phe20–Asp166 is the CENP-V/GFA domain. Positions 27, 29, 48, 50, 53, 95, and 98 each coordinate Zn(2+).

This sequence belongs to the Gfa family. Zn(2+) is required as a cofactor.

It catalyses the reaction S-(hydroxymethyl)glutathione = glutathione + formaldehyde. It functions in the pathway one-carbon metabolism; formaldehyde degradation; formate from formaldehyde (glutathione route): step 1/3. In terms of biological role, catalyzes the condensation of formaldehyde and glutathione to S-hydroxymethylglutathione. The sequence is that of Putative glutathione-dependent formaldehyde-activating enzyme from Aspergillus terreus (strain NIH 2624 / FGSC A1156).